A 271-amino-acid chain; its full sequence is 2-dehydro-3-deoxyphosphooctonate aldolase (271 aa).

Belongs to the KdsA family.

The protein resides in the cytoplasm. It catalyses the reaction D-arabinose 5-phosphate + phosphoenolpyruvate + H2O = 3-deoxy-alpha-D-manno-2-octulosonate-8-phosphate + phosphate. Its pathway is carbohydrate biosynthesis; 3-deoxy-D-manno-octulosonate biosynthesis; 3-deoxy-D-manno-octulosonate from D-ribulose 5-phosphate: step 2/3. It functions in the pathway bacterial outer membrane biogenesis; lipopolysaccharide biosynthesis. The protein is 2-dehydro-3-deoxyphosphooctonate aldolase of Campylobacter jejuni subsp. jejuni serotype O:6 (strain 81116 / NCTC 11828).